The sequence spans 292 residues: Nucleotide-binding protein azo0399 (292 aa).

8-15 (GLSGSGKS) contributes to the ATP binding site. 57 to 60 (DMRS) is a binding site for GTP.

It belongs to the RapZ-like family.

Its function is as follows. Displays ATPase and GTPase activities. The sequence is that of Nucleotide-binding protein azo0399 from Azoarcus sp. (strain BH72).